Reading from the N-terminus, the 371-residue chain is Trans-enoyl reductase calK (371 aa).

An NADP(+)-binding site is contributed by 51–54; sequence NDHK. Residue 145-152 coordinates substrate; that stretch reads WSTISLAF. NADP(+) contacts are provided by residues 181-184, 204-207, Tyr-222, and 269-270; these read GTAS, SNQS, and LE. 289–293 lines the substrate pocket; it reads GFQVL. 359-360 lines the NADP(+) pocket; sequence VR.

Belongs to the zinc-containing alcohol dehydrogenase family. In terms of assembly, monomer.

The protein operates within secondary metabolite biosynthesis. In terms of biological role, trans-enoyl reductase; part of the gene cluster that mediates the biosynthesis of calbistrin A and related compounds. Calbistrin A is a secondary metabolite with an interesting structure that was recently found to have bioactivity against leukemia cells. It consists of two polyketides linked by an ester bond: a bicyclic decalin containing polyketide and a linear 12 carbon dioic acid structure. The polyketide synthase calA is probably responsible for forming the decalin moiety. Because calA lacks a designated enoylreductase (ER) domain, the required activity is provided by the trans-enoyl reductase calK. Following release from the PKS, calF then probably catalyzes the oxidation and the subsequent Diels Alder cycloisomerization that lead to the formation of the decalin moiety. The decalin polyketide backbone includes two C-methyl groups, at C7 and C11 in backbone, of which the C7 position is probably methylated by the methyltransferase domain of calA. A candidate for adding the methyl group at C11, if not done by CalA, is the cluster methyltransferase calH. Several additional tailoring enzymes within the cluster could be involved in the modification of the decalin polyketide product. Those include the 3 cytochrome P450 monooxygenases CalE, CalG and CalL, of which one might be responsible for the introduction of the extra hydroxyl group attached to the backbone of the decalin moiety, at position C9 in the backbone, that allows for attachment of the linear moiety. One tailoring enzyme activity that is expected to be involved in biosynthesis of calbistrin is an acyltransferase for connecting the two polyketide synthase products, and which could be performed by the cluster acyltransferase calJ. The enzyme responsible for the biosynthesis of the linear moiety, probably a second PKS, has not been identified yet. The sequence is that of Trans-enoyl reductase calK from Penicillium decumbens.